Reading from the N-terminus, the 392-residue chain is ESX-1 secretion-associated protein EspA (392 aa).

The disordered stretch occupies residues 302-392 (TRQALRPRAD…GQKVLVRNVV (91 aa)). Residues 334–344 (QGMGGPVGMGG) show a composition bias toward gly residues.

Homodimer; disulfide-linked.

The protein localises to the secreted. Required for secretion of EsxA (ESAT-6) and EsxB (CFP-10) and for virulence. In Mycobacterium tuberculosis (strain CDC 1551 / Oshkosh), this protein is ESX-1 secretion-associated protein EspA.